The sequence spans 61 residues: MLKYAIIFAIISLIAGALGFTGVAAGSAAIAKVLFVVFLVLAVLFVVLALLGIGAARKAIK.

2 consecutive transmembrane segments (helical) span residues 5 to 25 and 33 to 53; these read AIIF…GVAA and VLFV…LLGI.

This sequence belongs to the UPF0391 family.

It is found in the cell membrane. The protein is UPF0391 membrane protein Ajs_0703 of Acidovorax sp. (strain JS42).